The primary structure comprises 463 residues: L-seryl-tRNA(Sec) selenium transferase (463 aa).

Lysine 295 is subject to N6-(pyridoxal phosphate)lysine.

This sequence belongs to the SelA family. As to quaternary structure, homodecamer; pentamer of dimers. Binds only one seryl-tRNA(Sec) per dimer. Pyridoxal 5'-phosphate serves as cofactor.

The protein localises to the cytoplasm. It catalyses the reaction L-seryl-tRNA(Sec) + selenophosphate + H(+) = L-selenocysteinyl-tRNA(Sec) + phosphate. It functions in the pathway aminoacyl-tRNA biosynthesis; selenocysteinyl-tRNA(Sec) biosynthesis; selenocysteinyl-tRNA(Sec) from L-seryl-tRNA(Sec) (bacterial route): step 1/1. Its function is as follows. Converts seryl-tRNA(Sec) to selenocysteinyl-tRNA(Sec) required for selenoprotein biosynthesis. The sequence is that of L-seryl-tRNA(Sec) selenium transferase from Shigella sonnei (strain Ss046).